Reading from the N-terminus, the 410-residue chain is Tegument protein VP16 homolog (410 aa).

A disordered region spans residues 388–410 (PPSPSEILPGDPPRPPTCGFLTR).

Belongs to the herpesviridae tegument protein VP16 protein family. Associates with the VP16-induced complex; binding to host HCFC1 activates VP16 for association with the octamer motif-binding host protein POU2F1, to form a multiprotein-DNA complex responsible for activating transcription of the viral immediate early genes.

The protein resides in the virion tegument. The protein localises to the host nucleus. In terms of biological role, transcriptional activator of immediate-early (IE) gene products (alpha genes). Acts as a key activator of lytic infection by initiating the lytic program through the assembly of the transcriptional regulatory VP16-induced complex composed of VP16 and two cellular factors, HCFC1 and POU2F1. VP16-induced complex represents a regulatory switch: when it is on, it promotes IE-gene expression and thus lytic infection, and when it is off, it limits IE-gene transcription favoring latent infection. Functionally, may play a role in the aggregation of tegument proteins around nucleocapsids during virus morphogenesis. This is Tegument protein VP16 homolog from Varicella-zoster virus (strain Dumas) (HHV-3).